The primary structure comprises 208 residues: Large ribosomal subunit protein uL3 (208 aa).

The disordered stretch occupies residues 123-146 (RHGQSRGPMAHGSRYHRRPGSMGP).

Belongs to the universal ribosomal protein uL3 family. Part of the 50S ribosomal subunit. Forms a cluster with proteins L14 and L19.

In terms of biological role, one of the primary rRNA binding proteins, it binds directly near the 3'-end of the 23S rRNA, where it nucleates assembly of the 50S subunit. The chain is Large ribosomal subunit protein uL3 from Streptococcus thermophilus (strain CNRZ 1066).